Here is a 459-residue protein sequence, read N- to C-terminus: Glutamyl-tRNA(Gln) amidotransferase subunit A, mitochondrial (459 aa).

Residues Lys-37 and Ser-114 each act as charge relay system in the active site. Ser-138 functions as the Acyl-ester intermediate in the catalytic mechanism.

Belongs to the amidase family. GatA subfamily. In terms of assembly, subunit of the heterotrimeric GatFAB amidotransferase (AdT) complex, composed of A, B and F subunits.

The protein resides in the mitochondrion. It carries out the reaction L-glutamyl-tRNA(Gln) + L-glutamine + ATP + H2O = L-glutaminyl-tRNA(Gln) + L-glutamate + ADP + phosphate + H(+). Functionally, allows the formation of correctly charged Gln-tRNA(Gln) through the transamidation of misacylated Glu-tRNA(Gln) in the mitochondria. The reaction takes place in the presence of glutamine and ATP through an activated gamma-phospho-Glu-tRNA(Gln). This is Glutamyl-tRNA(Gln) amidotransferase subunit A, mitochondrial from Yarrowia lipolytica (strain CLIB 122 / E 150) (Yeast).